The following is a 700-amino-acid chain: Phosphoribosylformylglycinamidine synthase subunit PurL (700 aa).

His34 is an active-site residue. Tyr37 is a binding site for ATP. Glu79 is a binding site for Mg(2+). Substrate-binding positions include 80–83 and Arg102; that span reads SHNH. His81 acts as the Proton acceptor in catalysis. Mg(2+) is bound at residue Asp103. Residue Gln227 coordinates substrate. Residue Asp255 coordinates Mg(2+). A substrate-binding site is contributed by 299 to 301; it reads ESQ. ATP contacts are provided by Asp476 and Gly513. Position 514 (Asn514) interacts with Mg(2+). Ser516 is a binding site for substrate.

Belongs to the FGAMS family. Monomer. Part of the FGAM synthase complex composed of 1 PurL, 1 PurQ and 2 PurS subunits.

It localises to the cytoplasm. It carries out the reaction N(2)-formyl-N(1)-(5-phospho-beta-D-ribosyl)glycinamide + L-glutamine + ATP + H2O = 2-formamido-N(1)-(5-O-phospho-beta-D-ribosyl)acetamidine + L-glutamate + ADP + phosphate + H(+). It functions in the pathway purine metabolism; IMP biosynthesis via de novo pathway; 5-amino-1-(5-phospho-D-ribosyl)imidazole from N(2)-formyl-N(1)-(5-phospho-D-ribosyl)glycinamide: step 1/2. Part of the phosphoribosylformylglycinamidine synthase complex involved in the purines biosynthetic pathway. Catalyzes the ATP-dependent conversion of formylglycinamide ribonucleotide (FGAR) and glutamine to yield formylglycinamidine ribonucleotide (FGAM) and glutamate. The FGAM synthase complex is composed of three subunits. PurQ produces an ammonia molecule by converting glutamine to glutamate. PurL transfers the ammonia molecule to FGAR to form FGAM in an ATP-dependent manner. PurS interacts with PurQ and PurL and is thought to assist in the transfer of the ammonia molecule from PurQ to PurL. The protein is Phosphoribosylformylglycinamidine synthase subunit PurL of Halobacterium salinarum (strain ATCC 29341 / DSM 671 / R1).